We begin with the raw amino-acid sequence, 243 residues long: Cyclin-dependent kinase 20 (243 aa).

The region spanning Y4–V243 is the Protein kinase domain. ATP is bound by residues I10–V18 and K33. The Proton acceptor role is filled by D127.

The protein belongs to the protein kinase superfamily. CMGC Ser/Thr protein kinase family. CDC2/CDKX subfamily. As to quaternary structure, monomer. Interacts with TBC1D32 and MAK.

The protein localises to the nucleus. It is found in the cytoplasm. The protein resides in the cell projection. It localises to the cilium. It carries out the reaction L-seryl-[protein] + ATP = O-phospho-L-seryl-[protein] + ADP + H(+). The catalysed reaction is L-threonyl-[protein] + ATP = O-phospho-L-threonyl-[protein] + ADP + H(+). In terms of biological role, required for high-level Shh responses in the developing neural tube. Together with TBC1D32, controls the structure of the primary cilium by coordinating assembly of the ciliary membrane and axoneme, allowing GLI2 to be properly activated in response to SHH signaling. Involved in cell growth. Activates CDK2, a kinase involved in the control of the cell cycle, by phosphorylating residue 'Thr-160'. The sequence is that of Cyclin-dependent kinase 20 (CDK20) from Macaca mulatta (Rhesus macaque).